The sequence spans 473 residues: ATP synthase subunit beta (473 aa).

Residue 158–165 (GGAGVGKT) participates in ATP binding.

The protein belongs to the ATPase alpha/beta chains family. F-type ATPases have 2 components, CF(1) - the catalytic core - and CF(0) - the membrane proton channel. CF(1) has five subunits: alpha(3), beta(3), gamma(1), delta(1), epsilon(1). CF(0) has three main subunits: a(1), b(2) and c(9-12). The alpha and beta chains form an alternating ring which encloses part of the gamma chain. CF(1) is attached to CF(0) by a central stalk formed by the gamma and epsilon chains, while a peripheral stalk is formed by the delta and b chains.

Its subcellular location is the cell membrane. It carries out the reaction ATP + H2O + 4 H(+)(in) = ADP + phosphate + 5 H(+)(out). Its function is as follows. Produces ATP from ADP in the presence of a proton gradient across the membrane. The catalytic sites are hosted primarily by the beta subunits. This is ATP synthase subunit beta from Geobacillus kaustophilus (strain HTA426).